Here is a 394-residue protein sequence, read N- to C-terminus: 3-phenylpropionate/cinnamic acid dioxygenase ferredoxin--NAD(+) reductase component (394 aa).

Thr5–Lys36 is an FAD binding site. An NAD(+)-binding site is contributed by Arg146–Glu174.

It belongs to the bacterial ring-hydroxylating dioxygenase ferredoxin reductase family. As to quaternary structure, this dioxygenase system consists of four proteins: the two subunits of the hydroxylase component (HcaE and HcaF), a ferredoxin (HcaC) and a ferredoxin reductase (HcaD). It depends on FAD as a cofactor.

The enzyme catalyses 2 reduced [2Fe-2S]-[ferredoxin] + NAD(+) + H(+) = 2 oxidized [2Fe-2S]-[ferredoxin] + NADH. The protein operates within aromatic compound metabolism; 3-phenylpropanoate degradation. Functionally, part of the multicomponent 3-phenylpropionate dioxygenase, that converts 3-phenylpropionic acid (PP) and cinnamic acid (CI) into 3-phenylpropionate-dihydrodiol (PP-dihydrodiol) and cinnamic acid-dihydrodiol (CI-dihydrodiol), respectively. This Photorhabdus laumondii subsp. laumondii (strain DSM 15139 / CIP 105565 / TT01) (Photorhabdus luminescens subsp. laumondii) protein is 3-phenylpropionate/cinnamic acid dioxygenase ferredoxin--NAD(+) reductase component.